The sequence spans 326 residues: Biotin synthase (326 aa).

Positions 51–278 (NEVQRSTLLS…TSYVRLSAGR (228 aa)) constitute a Radical SAM core domain. 3 residues coordinate [4Fe-4S] cluster: C66, C70, and C73. 4 residues coordinate [2Fe-2S] cluster: C110, C141, C201, and R273.

This sequence belongs to the radical SAM superfamily. Biotin synthase family. In terms of assembly, homodimer. [4Fe-4S] cluster serves as cofactor. Requires [2Fe-2S] cluster as cofactor.

It carries out the reaction (4R,5S)-dethiobiotin + (sulfur carrier)-SH + 2 reduced [2Fe-2S]-[ferredoxin] + 2 S-adenosyl-L-methionine = (sulfur carrier)-H + biotin + 2 5'-deoxyadenosine + 2 L-methionine + 2 oxidized [2Fe-2S]-[ferredoxin]. It participates in cofactor biosynthesis; biotin biosynthesis; biotin from 7,8-diaminononanoate: step 2/2. Functionally, catalyzes the conversion of dethiobiotin (DTB) to biotin by the insertion of a sulfur atom into dethiobiotin via a radical-based mechanism. The sequence is that of Biotin synthase from Azoarcus sp. (strain BH72).